The following is a 357-amino-acid chain: Probable dual-specificity RNA methyltransferase RlmN (357 aa).

Glutamate 95 serves as the catalytic Proton acceptor. One can recognise a Radical SAM core domain in the interval 106–340; sequence NRDRHTVCVS…VSVREEKGTD (235 aa). A disulfide bridge links cysteine 113 with cysteine 345. Residues cysteine 120, cysteine 124, and cysteine 127 each contribute to the [4Fe-4S] cluster site. S-adenosyl-L-methionine contacts are provided by residues 172 to 173, serine 204, 227 to 229, and asparagine 302; these read GE and SLH. The active-site S-methylcysteine intermediate is the cysteine 345.

Belongs to the radical SAM superfamily. RlmN family. [4Fe-4S] cluster serves as cofactor.

Its subcellular location is the cytoplasm. The catalysed reaction is adenosine(2503) in 23S rRNA + 2 reduced [2Fe-2S]-[ferredoxin] + 2 S-adenosyl-L-methionine = 2-methyladenosine(2503) in 23S rRNA + 5'-deoxyadenosine + L-methionine + 2 oxidized [2Fe-2S]-[ferredoxin] + S-adenosyl-L-homocysteine. The enzyme catalyses adenosine(37) in tRNA + 2 reduced [2Fe-2S]-[ferredoxin] + 2 S-adenosyl-L-methionine = 2-methyladenosine(37) in tRNA + 5'-deoxyadenosine + L-methionine + 2 oxidized [2Fe-2S]-[ferredoxin] + S-adenosyl-L-homocysteine. Its function is as follows. Specifically methylates position 2 of adenine 2503 in 23S rRNA and position 2 of adenine 37 in tRNAs. The sequence is that of Probable dual-specificity RNA methyltransferase RlmN from Desulfitobacterium hafniense (strain Y51).